The chain runs to 607 residues: TOM1-like protein 8 (607 aa).

Residues 9–138 (ATSDMLIGPD…ELLRAGIVFP (130 aa)) enclose the VHS domain. A disordered region spans residues 141-175 (PQITPSSGQNGPSTRYPQNSRNARQEAIDTSTESE). Positions 175–263 (EFPTLSLTEI…LLAKHEAIAS (89 aa)) constitute a GAT domain. S297 carries the post-translational modification Phosphoserine. Over residues 355–379 (NNCESSTPTSNPHANHQKVQQNYSN) the composition is skewed to polar residues. 3 disordered regions span residues 355–393 (NNCE…YYGQ), 407–460 (QPSS…SPTH), and 555–582 (DNGN…NKKP). S410 bears the Phosphoserine mark. Positions 448–460 (QSPSSSPQYSPTH) are enriched in low complexity. Positions 555–569 (DNGNNNTNPYQVSSH) are enriched in polar residues.

Belongs to the TOM1 family. Specifically expressed in siliques and flowers.

The protein resides in the membrane. Might contribute to the loading of the ESCRT machinery. In Arabidopsis thaliana (Mouse-ear cress), this protein is TOM1-like protein 8.